We begin with the raw amino-acid sequence, 72 residues long: Protein RALF-like 36 (72 aa).

The first 27 residues, 1 to 27 (MGISKKTVVQSFALIIIISIVMSTTEA), serve as a signal peptide directing secretion. 2 disulfides stabilise this stretch: C43–C51 and C63–C69.

Belongs to the plant rapid alkalinization factor (RALF) family.

The protein resides in the secreted. In terms of biological role, cell signaling peptide that may regulate plant stress, growth, and development. Mediates a rapid alkalinization of extracellular space by mediating a transient increase in the cytoplasmic Ca(2+) concentration leading to a calcium-dependent signaling events through a cell surface receptor and a concomitant activation of some intracellular mitogen-activated protein kinases. The polypeptide is Protein RALF-like 36 (Arabidopsis thaliana (Mouse-ear cress)).